The following is a 564-amino-acid chain: Homeobox protein unc-62 (564 aa).

5 disordered regions span residues 40–59, 216–270, 293–313, 328–397, and 455–503; these read NEQFNDGYGPPPGSASADPA, ERAS…VMGG, SSSSNQAGDHPLANGGTLHST, PSTC…KVPK, and IDQN…PSSL. The MEIS N-terminal domain maps to 133–218; the sequence is SSDVCSSASF…PLDIVGDERA (86 aa). The segment covering 219-230 has biased composition (low complexity); sequence SSSQPPMSPGSM. Polar residues-rich tracts occupy residues 328–344 and 381–390; these read PSTCSSGGLRQDSTPLS and LSDSANGSQN. Positions 392 to 454 form a DNA-binding region, homeobox; TALE-type; that stretch reads KRKVPKVFSK…NARRRIVQPM (63 aa). 2 stretches are compositionally biased toward polar residues: residues 455 to 469 and 494 to 503; these read IDQNNRAGRSGQMNV and ANYSPDPSSL.

This sequence belongs to the TALE/MEIS homeobox family. In terms of assembly, forms a heterodimer with homeobox ceh-60.

The protein localises to the nucleus. Acts redundantly with ceh-20 and ceh-40 to perform overlapping roles during embryogenesis. Required for postembryonic development of the ectoderm, including the Q, V and P cell lineages, playing a crucial role in ensuring that these cells and their descendants undergo their invariant patterns of cell division, migration, fusion and morphogenesis. Has a role in the mig-13 pathway to promote anterior migration of neuroblasts in the Q lineage. Required for multiple roles in regulating vulva development. Associates with homeobox ceh-60 to regulate gene expression, including repression of genes involved in innate immunity and activation of genes involved in vitellogenesis. Involved in lipid homeostasis, contributing to the formation of the cuticle. The chain is Homeobox protein unc-62 (unc-62) from Caenorhabditis elegans.